The sequence spans 520 residues: uncharacterized protein (520 aa).

Transmembrane regions (helical) follow at residues valine 38–glycine 58, isoleucine 84–asparagine 104, isoleucine 105–valine 125, isoleucine 138–leucine 158, valine 167–threonine 187, phenylalanine 220–leucine 240, phenylalanine 271–alanine 291, isoleucine 318–isoleucine 338, and alanine 355–phenylalanine 375.

The protein localises to the cell membrane. This is an uncharacterized protein from Mycoplasma genitalium (strain ATCC 33530 / DSM 19775 / NCTC 10195 / G37) (Mycoplasmoides genitalium).